The primary structure comprises 267 residues: GTP cyclohydrolase MptA (267 aa).

It belongs to the GTP cyclohydrolase IV family. Homodimer. Fe(2+) is required as a cofactor.

It carries out the reaction GTP + H2O = 7,8-dihydroneopterin 2',3'-cyclic phosphate + formate + diphosphate + H(+). It participates in cofactor biosynthesis; 5,6,7,8-tetrahydromethanopterin biosynthesis. Converts GTP to 7,8-dihydro-D-neopterin 2',3'-cyclic phosphate, the first intermediate in the biosynthesis of coenzyme methanopterin. This chain is GTP cyclohydrolase MptA, found in Pyrococcus furiosus (strain ATCC 43587 / DSM 3638 / JCM 8422 / Vc1).